A 209-amino-acid polypeptide reads, in one-letter code: Redox-sensing transcriptional repressor Rex (209 aa).

The H-T-H motif DNA-binding region spans 16-55; sequence LYYRFIQNLSLSGKQRVSSAELSEAVKVDSATIRRDFSYF. NAD(+) is bound at residue 90–95; that stretch reads GVGNLG.

This sequence belongs to the transcriptional regulatory Rex family. Homodimer.

The protein localises to the cytoplasm. In terms of biological role, modulates transcription in response to changes in cellular NADH/NAD(+) redox state. This Bacillus cereus (strain ATCC 10987 / NRS 248) protein is Redox-sensing transcriptional repressor Rex.